The primary structure comprises 203 residues: GTP cyclohydrolase-2 (203 aa).

Residue 49 to 53 coordinates GTP; that stretch reads RIHSE. Residues Cys-54, Cys-65, and Cys-67 each coordinate Zn(2+). GTP contacts are provided by residues Gln-70, 92 to 94, and Thr-114; that span reads EGR. The active-site Proton acceptor is the Asp-126. Arg-128 serves as the catalytic Nucleophile. Residues Thr-149 and Lys-154 each coordinate GTP.

Belongs to the GTP cyclohydrolase II family. It depends on Zn(2+) as a cofactor.

The enzyme catalyses GTP + 4 H2O = 2,5-diamino-6-hydroxy-4-(5-phosphoribosylamino)-pyrimidine + formate + 2 phosphate + 3 H(+). Its pathway is cofactor biosynthesis; riboflavin biosynthesis; 5-amino-6-(D-ribitylamino)uracil from GTP: step 1/4. In terms of biological role, catalyzes the conversion of GTP to 2,5-diamino-6-ribosylamino-4(3H)-pyrimidinone 5'-phosphate (DARP), formate and pyrophosphate. The polypeptide is GTP cyclohydrolase-2 (Shewanella sp. (strain ANA-3)).